A 75-amino-acid polypeptide reads, in one-letter code: Protease B inhibitor 1 (75 aa).

Phosphothreonine is present on threonine 74.

Belongs to the protease inhibitor I9 family. As to quaternary structure, part of the heterodimeric LMA1 complex together with the thioredoxin II/TRX2. LMA1 binds to the ATPase SEC18.

The protein localises to the cytoplasm. The protein resides in the nucleus. In terms of biological role, cytosolic inhibitor of vacuolar proteinase B (yscB), probably regulating protease B activity during limited proteolysis. PBI2 is a component of the LMA1 complex, which is involved in the facilitation of vesicle fusion such as homotypic vacuole and ER-derived COPII vesicle fusion with the Golgi. The chain is Protease B inhibitor 1 (PBI2) from Saccharomyces cerevisiae (Baker's yeast).